The primary structure comprises 581 residues: Oligo-1,6-glucosidase IMA5 (581 aa).

The Nucleophile role is filled by Asp210. The Proton donor role is filled by Glu272.

This sequence belongs to the glycosyl hydrolase 13 family.

The enzyme catalyses Hydrolysis of (1-&gt;6)-alpha-D-glucosidic linkages in some oligosaccharides produced from starch and glycogen by alpha-amylase, and in isomaltose.. Functionally, alpha-glucosidase with specificity for isomaltose, maltose, and palatinose. The chain is Oligo-1,6-glucosidase IMA5 (IMA5) from Saccharomyces cerevisiae (strain ATCC 204508 / S288c) (Baker's yeast).